A 913-amino-acid chain; its full sequence is Rab GTPase-activating protein tbc-8 (913 aa).

Residues 1–24 (MQMFRHSSADMWRAKKPTLERRST) form a disordered region. The RUN domain occupies 106–240 (NLNSPYVTSL…TYRRMSNRIE (135 aa)). The 248-residue stretch at 597–844 (INTKEVRRMA…KVWEVIWAAQ (248 aa)) folds into the Rab-GAP TBC domain.

The protein belongs to the RUTBC family. In terms of assembly, interacts with rab-19. Interacts with ric-19; the interaction is direct and may be required for the activation of rab-2 and dense vesicle maturation in cholinergic motoneurons. Interacts (via RUN domain) with rund-1. Does not interact with unc-108 (GTP-bound form). In terms of tissue distribution, expressed in neurons in the head, tail and ventral nerve cord (at protein level).

It is found in the golgi apparatus. The protein localises to the trans-Golgi network. It localises to the early endosome. Its subcellular location is the cytoplasmic vesicle membrane. Interacts with numerous Rab family members, functioning as Rab effector for some, and as GTPase activator for others. GTPase activator for rab-2. In association with ric-19 activates rab-2 during dense core vesicle maturation in cholinergic motoneurons. This is Rab GTPase-activating protein tbc-8 from Caenorhabditis elegans.